We begin with the raw amino-acid sequence, 555 residues long: Glutamine--tRNA ligase (555 aa).

A 'HIGH' region motif is present at residues 34 to 44 (PEPNGYLHIGH). ATP is bound by residues 35-37 (EPN) and 41-47 (HIGHAKS). L-glutamine contacts are provided by Asp67 and Tyr212. Residues Thr231, 261–262 (RL), and 269–271 (MSK) contribute to the ATP site. Residues 268–272 (VMSKR) carry the 'KMSKS' region motif. The interval 317–324 (TKQDNTIE) is interaction with tRNA.

It belongs to the class-I aminoacyl-tRNA synthetase family. As to quaternary structure, monomer.

The protein localises to the cytoplasm. The enzyme catalyses tRNA(Gln) + L-glutamine + ATP = L-glutaminyl-tRNA(Gln) + AMP + diphosphate. The sequence is that of Glutamine--tRNA ligase from Salmonella newport (strain SL254).